The primary structure comprises 159 residues: Probable acetolactate synthase small subunit (159 aa).

Residues 4–78 (TIAVLVENKP…ETIKVSEITE (75 aa)) form the ACT domain.

This sequence belongs to the acetolactate synthase small subunit family. As to quaternary structure, dimer of large and small chains.

The enzyme catalyses 2 pyruvate + H(+) = (2S)-2-acetolactate + CO2. It participates in amino-acid biosynthesis; L-isoleucine biosynthesis; L-isoleucine from 2-oxobutanoate: step 1/4. Its pathway is amino-acid biosynthesis; L-valine biosynthesis; L-valine from pyruvate: step 1/4. This chain is Probable acetolactate synthase small subunit (ilvH), found in Archaeoglobus fulgidus (strain ATCC 49558 / DSM 4304 / JCM 9628 / NBRC 100126 / VC-16).